The sequence spans 177 residues: Shikimate kinase (177 aa).

An ATP-binding site is contributed by 17–22; the sequence is GAGKST. Ser21 provides a ligand contact to Mg(2+). The substrate site is built by Asp39, Arg63, and Gly85. Position 123 (Arg123) interacts with ATP. Position 142 (Arg142) interacts with substrate. Arg160 is an ATP binding site.

The protein belongs to the shikimate kinase family. In terms of assembly, monomer. Mg(2+) is required as a cofactor.

Its subcellular location is the cytoplasm. The enzyme catalyses shikimate + ATP = 3-phosphoshikimate + ADP + H(+). It functions in the pathway metabolic intermediate biosynthesis; chorismate biosynthesis; chorismate from D-erythrose 4-phosphate and phosphoenolpyruvate: step 5/7. Its function is as follows. Catalyzes the specific phosphorylation of the 3-hydroxyl group of shikimic acid using ATP as a cosubstrate. In Halorhodospira halophila (strain DSM 244 / SL1) (Ectothiorhodospira halophila (strain DSM 244 / SL1)), this protein is Shikimate kinase.